The sequence spans 291 residues: Ribose-phosphate pyrophosphokinase (291 aa).

ATP contacts are provided by residues 34-36 (DGE) and 93-94 (RQ). The Mg(2+) site is built by histidine 127 and aspartate 165. The active site involves lysine 188. D-ribose 5-phosphate contacts are provided by residues arginine 190, aspartate 216, and 220–224 (STGGT).

This sequence belongs to the ribose-phosphate pyrophosphokinase family. Class III (archaeal) subfamily. Requires Mg(2+) as cofactor.

It localises to the cytoplasm. It catalyses the reaction D-ribose 5-phosphate + ATP = 5-phospho-alpha-D-ribose 1-diphosphate + AMP + H(+). Its pathway is metabolic intermediate biosynthesis; 5-phospho-alpha-D-ribose 1-diphosphate biosynthesis; 5-phospho-alpha-D-ribose 1-diphosphate from D-ribose 5-phosphate (route I): step 1/1. Its function is as follows. Involved in the biosynthesis of the central metabolite phospho-alpha-D-ribosyl-1-pyrophosphate (PRPP) via the transfer of pyrophosphoryl group from ATP to 1-hydroxyl of ribose-5-phosphate (Rib-5-P). The polypeptide is Ribose-phosphate pyrophosphokinase (Sulfolobus acidocaldarius (strain ATCC 33909 / DSM 639 / JCM 8929 / NBRC 15157 / NCIMB 11770)).